A 362-amino-acid polypeptide reads, in one-letter code: MWLLKKLIQRDIDLSPLRFQTCRLLLGNVWNRELTIIQRRILRRLRNRKRSIKKRKIYSKKYLTSYIQLQTTRKLSLFYGDLPITEMHRGTKRTSYIPFLLNLETRFDVILLRLHFLETIPQARQLISHRRVCVNKGMVSITHFKLSHGDIISFQENNAIIRGEEIRRSFYKEILVEKIIGKLLHQPLRMWRRSKTEWFHLLKTKRGCRLLLKSRFLQQLRSSMQEEDLERTKKFGSEKVCLGSSFAEHKRMKRNLLKSLFLSKRRKDKNLNLPTRTISPIVYNSSLSLYSNSTYCFASPHKLTMKRRIKRIELPTHYLEVNYRTPKAVVFYGPNIGHIPHDIRLKDLNLLLWSRNGRGQNI.

An S4 RNA-binding domain is found at T105–I179.

The protein belongs to the universal ribosomal protein uS4 family. Component of the mitochondrial ribosome small subunit.

The protein localises to the mitochondrion. The chain is Small ribosomal subunit protein uS4m (RPS4) from Arabidopsis thaliana (Mouse-ear cress).